Here is a 1117-residue protein sequence, read N- to C-terminus: Sodium-driven chloride bicarbonate exchanger (1117 aa).

Residues 1 to 14 (MQSGTCESFQSLSH) show a composition bias toward polar residues. Disordered stretches follow at residues 1-26 (MQSG…VDRG), 57-94 (GRKS…FDTP), 244-312 (KQSE…PHQQ), and 456-475 (NGTA…GPEL). The Cytoplasmic portion of the chain corresponds to 1–508 (MQSGTCESFQ…DFTDALSLQC (508 aa)). A compositionally biased stretch (basic and acidic residues) spans 15 to 26 (QRNDEEAVVDRG). Positions 58–75 (RKSHRRHRHRGHKHRKRD) are enriched in basic residues. Basic and acidic residues predominate over residues 76–89 (RERDSGLEDGRESP). Ser88 bears the Phosphoserine mark. Thr93 carries the phosphothreonine modification. Polar residues predominate over residues 247–263 (EPNSMDKNAGQVVSPQS). Ser275 is subject to Phosphoserine. A helical membrane pass occupies residues 509–529 (LASFLFLYCACMSPVITFGGL). Over 530-537 (LGEATEGR) the chain is Extracellular. Residues 538 to 558 (ISAIESLFGASMTGIAYSLFG) traverse the membrane as a helical segment. At 559-561 (GQP) the chain is on the cytoplasmic side. The chain crosses the membrane as a helical span at residues 562 to 582 (LTILGSTGPVLVFEKILFKFC). Residues 583–595 (KEYGLSYLSLRAS) are Extracellular-facing. A helical transmembrane segment spans residues 596-616 (IGLWTATLCIILVATDASSLV). Topologically, residues 617–625 (CYITRFTEE) are cytoplasmic. Residues 626–646 (AFASLICIIFIYEALEKLFEL) form a helical membrane-spanning segment. Topologically, residues 647 to 719 (SEAYPINMHN…VGRACGHEHP (73 aa)) are extracellular. N-linked (GlcNAc...) asparagine glycosylation is found at Asn673, Asn676, Asn686, and Asn696. Residues 720–740 (YVPDVLFWSVILFFSTVTLSA) form a helical membrane-spanning segment. The Cytoplasmic segment spans residues 741-761 (TLKQFKTSRYFPTKVRSIVSD). A helical transmembrane segment spans residues 762–782 (FAVFLTILCMVLIDYAIGIPS). Residues 783-808 (PKLQVPSVFKPTRDDRGWFVTPLGPN) are Extracellular-facing. The helical transmembrane segment at 809–829 (PWWTVIAAIIPALLCTILIFM) threads the bilayer. At 830–854 (DQQITAVIINRKEHKLKKGCGYHLD) the chain is on the cytoplasmic side. The helical transmembrane segment at 855-875 (LLMVAVMLGVCSIMGLPWFVA) threads the bilayer. At 876 to 911 (ATVLSITHVNSLKLESECSAPGEQPKFLGIREQRVT) the chain is on the extracellular side. The helical transmembrane segment at 912–932 (GLMIFILMGSSVFMTSILKFI) threads the bilayer. At 933–934 (PM) the chain is on the cytoplasmic side. Residues 935 to 955 (PVLYGVFLYMGASSLKGIQFF) traverse the membrane as a helical segment. The Extracellular portion of the chain corresponds to 956 to 997 (DRIKLFWMPAKHQPDFIYLRHVPLRKVHLFTVIQMSCLGLLW). The chain crosses the membrane as a helical span at residues 998-1018 (IIKVSRAAIVFPMMVLALVFV). Topologically, residues 1019–1117 (RKLMDFLFTK…SSFPSKSSPS (99 aa)) are cytoplasmic. Phosphoserine is present on residues Ser1056 and Ser1084.

The protein belongs to the anion exchanger (TC 2.A.31) family. In terms of processing, N-glycosylated.

The protein resides in the basolateral cell membrane. It localises to the apical cell membrane. The protein localises to the cell projection. Its subcellular location is the dendrite. It is found in the axon. The protein resides in the perikaryon. It localises to the presynapse. The protein localises to the postsynapse. In terms of biological role, sodium/bicarbonate cotransporter which plays an important role in regulating intracellular pH. Has been shown to act as a sodium/bicarbonate cotransporter in exchange for intracellular chloride. Has also been shown to act as a sodium/biocarbonate cotransporter which does not couple net influx of bicarbonate to net efflux of chloride, with the observed chloride efflux being due to chloride self-exchange. Controls neuronal pH and may contribute to the secretion of cerebrospinal fluid. Acting on presynaptic intracellular pH, it promotes GABA release, reduces the excitability of CA1 pyramidal neurons, and modulates short-term synaptic plasticity. Required in retinal cells to maintain normal pH which is necessary for normal vision. In the kidney, likely to mediate bicarbonate reclamation in the apical membrane of the proximal tubules. This is Sodium-driven chloride bicarbonate exchanger from Bos taurus (Bovine).